Reading from the N-terminus, the 320-residue chain is o-succinylbenzoate synthase (320 aa).

Lysine 133 serves as the catalytic Proton donor. Mg(2+) contacts are provided by aspartate 161, glutamate 190, and aspartate 213. Residue lysine 235 is the Proton acceptor of the active site.

The protein belongs to the mandelate racemase/muconate lactonizing enzyme family. MenC type 1 subfamily. A divalent metal cation is required as a cofactor.

The enzyme catalyses (1R,6R)-6-hydroxy-2-succinyl-cyclohexa-2,4-diene-1-carboxylate = 2-succinylbenzoate + H2O. It participates in quinol/quinone metabolism; 1,4-dihydroxy-2-naphthoate biosynthesis; 1,4-dihydroxy-2-naphthoate from chorismate: step 4/7. It functions in the pathway quinol/quinone metabolism; menaquinone biosynthesis. Its function is as follows. Converts 2-succinyl-6-hydroxy-2,4-cyclohexadiene-1-carboxylate (SHCHC) to 2-succinylbenzoate (OSB). The chain is o-succinylbenzoate synthase from Salmonella arizonae (strain ATCC BAA-731 / CDC346-86 / RSK2980).